Here is a 585-residue protein sequence, read N- to C-terminus: MGAPRISHSLALLLCCSVLSSVYALVDADDVITKEEQIILLRNAQAQCEQRLKEVLRVPELAESAKDWMSRSAKTKKEKPAEKLYSQAEESREVSDRSRLQDGFCLPEWDNIVCWPAGVPGKVVAVPCPDYIYDFNHKGRAYRRCDSNGSWELVPGNNRTWANYSECVKFLTNETREREVFDRLGMIYTVGYSISLGSLTVAVLILGYFRRLHCTRNYIHMHLFVSFMLRAVSIFIKDAVLYSGVSTDEIERITEEELRAFTEPPPADKAGFVGCRVAVTVFLYFLTTNYYWILVEGLYLHSLIFMAFFSEKKYLWGFTLFGWGLPAVFVAVWVTVRATLANTECWDLSSGNKKWIIQVPILAAIVVNFILFINIIRVLATKLRETNAGRCDTRQQYRKLLKSTLVLMPLFGVHYIVFMATPYTEVSGILWQVQMHYEMLFNSFQGFFVAIIYCFCNGEVQAEIKKSWSRWTLALDFKRKARSGSSTYSYGPMVSHTSVTNVGPRGGLALSLSPRLAPGAGASANGHHQLPGYVKHGSISENSLPSSGPEPGTKDDGYLNGSGLYEPMVGEQPPPLLEEERETVM.

The N-terminal stretch at 1–26 is a signal peptide; sequence MGAPRISHSLALLLCCSVLSSVYALV. The Extracellular segment spans residues 27–185; the sequence is DADDVITKEE…REREVFDRLG (159 aa). 3 disulfide bridges follow: cysteine 48-cysteine 114, cysteine 105-cysteine 145, and cysteine 128-cysteine 167. The disordered stretch occupies residues 69–90; sequence MSRSAKTKKEKPAEKLYSQAEE. Residues asparagine 148, asparagine 158, asparagine 163, and asparagine 173 are each glycosylated (N-linked (GlcNAc...) asparagine). A helical transmembrane segment spans residues 186–209; that stretch reads MIYTVGYSISLGSLTVAVLILGYF. The Cytoplasmic segment spans residues 210–216; the sequence is RRLHCTR. The helical transmembrane segment at 217-236 threads the bilayer; the sequence is NYIHMHLFVSFMLRAVSIFI. The Extracellular segment spans residues 237 to 276; it reads KDAVLYSGVSTDEIERITEEELRAFTEPPPADKAGFVGCR. Residues 277–300 traverse the membrane as a helical segment; sequence VAVTVFLYFLTTNYYWILVEGLYL. Topologically, residues 301–314 are cytoplasmic; the sequence is HSLIFMAFFSEKKY. Residues 315 to 336 form a helical membrane-spanning segment; sequence LWGFTLFGWGLPAVFVAVWVTV. Topologically, residues 337–355 are extracellular; the sequence is RATLANTECWDLSSGNKKW. Residues 356–376 traverse the membrane as a helical segment; sequence IIQVPILAAIVVNFILFINII. The Cytoplasmic segment spans residues 377 to 403; the sequence is RVLATKLRETNAGRCDTRQQYRKLLKS. The helical transmembrane segment at 404-422 threads the bilayer; that stretch reads TLVLMPLFGVHYIVFMATP. Topologically, residues 423–434 are extracellular; sequence YTEVSGILWQVQ. A helical membrane pass occupies residues 435 to 457; it reads MHYEMLFNSFQGFFVAIIYCFCN. Over 458-585 the chain is Cytoplasmic; it reads GEVQAEIKKS…LLEEERETVM (128 aa). The Important for interaction with G proteins motif lies at 468 to 471; sequence WSRW. A disordered region spans residues 531–585; sequence PGYVKHGSISENSLPSSGPEPGTKDDGYLNGSGLYEPMVGEQPPPLLEEERETVM.

This sequence belongs to the G-protein coupled receptor 2 family. In terms of assembly, homodimer in the absence of bound ligand. Peptide hormone binding leads to dissociation of the homodimer. N-glycosylated.

It localises to the cell membrane. Its function is as follows. G-protein-coupled receptor for parathyroid hormone (PTH) and for parathyroid hormone-related peptide (PTHLH). Ligand binding causes a conformation change that triggers signaling via guanine nucleotide-binding proteins (G proteins) and modulates the activity of downstream effectors, such as adenylate cyclase (cAMP). PTH1R is coupled to G(s) G alpha proteins and mediates activation of adenylate cyclase activity. PTHLH dissociates from PTH1R more rapidly than PTH; as consequence, the cAMP response induced by PTHLH decays faster than the response induced by PTH. In Didelphis virginiana (North American opossum), this protein is Parathyroid hormone/parathyroid hormone-related peptide receptor (PTH1R).